A 149-amino-acid polypeptide reads, in one-letter code: D-aminoacyl-tRNA deacylase (149 aa).

The short motif at 137-138 (GP) is the Gly-cisPro motif, important for rejection of L-amino acids element.

It belongs to the DTD family. As to quaternary structure, homodimer.

The protein localises to the cytoplasm. The enzyme catalyses glycyl-tRNA(Ala) + H2O = tRNA(Ala) + glycine + H(+). It catalyses the reaction a D-aminoacyl-tRNA + H2O = a tRNA + a D-alpha-amino acid + H(+). Functionally, an aminoacyl-tRNA editing enzyme that deacylates mischarged D-aminoacyl-tRNAs. Also deacylates mischarged glycyl-tRNA(Ala), protecting cells against glycine mischarging by AlaRS. Acts via tRNA-based rather than protein-based catalysis; rejects L-amino acids rather than detecting D-amino acids in the active site. By recycling D-aminoacyl-tRNA to D-amino acids and free tRNA molecules, this enzyme counteracts the toxicity associated with the formation of D-aminoacyl-tRNA entities in vivo and helps enforce protein L-homochirality. This chain is D-aminoacyl-tRNA deacylase, found in Janthinobacterium sp. (strain Marseille) (Minibacterium massiliensis).